We begin with the raw amino-acid sequence, 117 residues long: Large ribosomal subunit protein uL18 (117 aa).

Belongs to the universal ribosomal protein uL18 family. In terms of assembly, part of the 50S ribosomal subunit; part of the 5S rRNA/L5/L18/L25 subcomplex. Contacts the 5S and 23S rRNAs.

Functionally, this is one of the proteins that bind and probably mediate the attachment of the 5S RNA into the large ribosomal subunit, where it forms part of the central protuberance. This Photorhabdus laumondii subsp. laumondii (strain DSM 15139 / CIP 105565 / TT01) (Photorhabdus luminescens subsp. laumondii) protein is Large ribosomal subunit protein uL18.